The chain runs to 369 residues: 3-dehydroquinate synthase (369 aa).

NAD(+)-binding positions include 78–83 (DGERYK), 112–116 (GVIGD), 136–137 (TT), Lys-149, Lys-158, and 176–179 (TLTT). Glu-191, His-254, and His-271 together coordinate Zn(2+).

Belongs to the sugar phosphate cyclases superfamily. Dehydroquinate synthase family. It depends on NAD(+) as a cofactor. Requires Co(2+) as cofactor. The cofactor is Zn(2+).

It localises to the cytoplasm. It carries out the reaction 7-phospho-2-dehydro-3-deoxy-D-arabino-heptonate = 3-dehydroquinate + phosphate. Its pathway is metabolic intermediate biosynthesis; chorismate biosynthesis; chorismate from D-erythrose 4-phosphate and phosphoenolpyruvate: step 2/7. Catalyzes the conversion of 3-deoxy-D-arabino-heptulosonate 7-phosphate (DAHP) to dehydroquinate (DHQ). The polypeptide is 3-dehydroquinate synthase (Nitrosomonas europaea (strain ATCC 19718 / CIP 103999 / KCTC 2705 / NBRC 14298)).